The following is a 731-amino-acid chain: Gelsolin (731 aa).

The tract at residues valine 2–phenylalanine 125 is actin-severing. Residues phenylalanine 25 to leucine 107 form a Gelsolin-like 1 repeat. Residue tyrosine 35 is modified to Phosphotyrosine. The Ca(2+) site is built by glycine 41, aspartate 42, glutamate 73, aspartate 85, glycine 90, and alanine 92. The segment at aspartate 72–glycine 75 is actin-actin interfilament contact point. Residue lysine 111 to lysine 118 coordinates a 1,2-diacyl-sn-glycero-3-phospho-(1D-myo-inositol-4,5-bisphosphate). Residue valine 121 coordinates Ca(2+). Arginine 137–arginine 145 is an a 1,2-diacyl-sn-glycero-3-phospho-(1D-myo-inositol-4,5-bisphosphate) binding site. The Gelsolin-like 2 repeat unit spans residues valine 147–methionine 219. Residues glycine 162 and aspartate 163 each contribute to the Ca(2+) site. The cysteines at positions 164 and 177 are disulfide-linked. Position 185 (glutamate 185) interacts with Ca(2+). Basic and acidic residues predominate over residues arginine 197–glutamate 211. Residues arginine 197 to proline 216 form a disordered region. Residues aspartate 235, glutamate 278, aspartate 279, and glutamate 303 each coordinate Ca(2+). One copy of the Gelsolin-like 3 repeat lies at aspartate 266–phenylalanine 338. 2 positions are modified to phosphotyrosine: tyrosine 358 and tyrosine 414. Residues alanine 383–alanine 731 are actin-binding, Ca-sensitive. The Gelsolin-like 4 repeat unit spans residues serine 404 to methionine 485. Glycine 420, aspartate 421, glutamate 451, aspartate 463, glycine 468, proline 470, and threonine 500 together coordinate Ca(2+). A Gelsolin-like 5 repeat occupies alanine 527 to tryptophan 591. Lysine 533 bears the N6-acetyllysine mark. The Ca(2+) site is built by asparagine 540 and aspartate 541. Tyrosine 552 is subject to Phosphotyrosine. Glutamate 563 contacts Ca(2+). Position 600 is a phosphotyrosine (tyrosine 600). Residues isoleucine 630–phenylalanine 705 form a Gelsolin-like 6 repeat. Ca(2+)-binding residues include aspartate 645, aspartate 646, and glutamate 668. A Phosphothreonine modification is found at threonine 691.

It belongs to the villin/gelsolin family. Binds to actin and to fibronectin. Identified in a complex composed of ACTA1, COBL, GSN and TMSB4X. Interacts with the inactive form of EIF2AK2/PKR. Interacts with FLII.

It localises to the cytoplasm. It is found in the cytoskeleton. Functionally, calcium-regulated, actin-modulating protein that binds to the plus (or barbed) ends of actin monomers or filaments, preventing monomer exchange (end-blocking or capping). It can promote the assembly of monomers into filaments (nucleation) as well as sever filaments already formed. Plays a role in ciliogenesis. This chain is Gelsolin (GSN), found in Bos taurus (Bovine).